The chain runs to 363 residues: Peptide chain release factor 1 (363 aa).

Glutamine 237 is subject to N5-methylglutamine.

The protein belongs to the prokaryotic/mitochondrial release factor family. In terms of processing, methylated by PrmC. Methylation increases the termination efficiency of RF1.

The protein localises to the cytoplasm. Peptide chain release factor 1 directs the termination of translation in response to the peptide chain termination codons UAG and UAA. The protein is Peptide chain release factor 1 (prfA) of Mycoplasma capricolum subsp. capricolum (strain California kid / ATCC 27343 / NCTC 10154).